A 643-amino-acid chain; its full sequence is Threonine--tRNA ligase (643 aa).

The TGS domain occupies 1-65; it reads MIHITLPDGS…NKDMPLSIVT (65 aa). Residues 246 to 537 form a catalytic region; sequence DHRKLGRELD…LIEQHAGAMP (292 aa). Positions 337, 388, and 514 each coordinate Zn(2+).

Belongs to the class-II aminoacyl-tRNA synthetase family. In terms of assembly, homodimer. Requires Zn(2+) as cofactor.

Its subcellular location is the cytoplasm. The enzyme catalyses tRNA(Thr) + L-threonine + ATP = L-threonyl-tRNA(Thr) + AMP + diphosphate + H(+). Its function is as follows. Catalyzes the attachment of threonine to tRNA(Thr) in a two-step reaction: L-threonine is first activated by ATP to form Thr-AMP and then transferred to the acceptor end of tRNA(Thr). Also edits incorrectly charged L-seryl-tRNA(Thr). This Delftia acidovorans (strain DSM 14801 / SPH-1) protein is Threonine--tRNA ligase.